The primary structure comprises 436 residues: 3-ketoacyl-CoA thiolase (436 aa).

The active-site Acyl-thioester intermediate is Cys99. Active-site proton acceptor residues include His392 and Cys422.

Belongs to the thiolase-like superfamily. Thiolase family. In terms of assembly, heterotetramer of two alpha chains (FadJ) and two beta chains (FadI).

The protein resides in the cytoplasm. The catalysed reaction is an acyl-CoA + acetyl-CoA = a 3-oxoacyl-CoA + CoA. It participates in lipid metabolism; fatty acid beta-oxidation. Catalyzes the final step of fatty acid oxidation in which acetyl-CoA is released and the CoA ester of a fatty acid two carbons shorter is formed. The polypeptide is 3-ketoacyl-CoA thiolase (Escherichia coli O81 (strain ED1a)).